Consider the following 396-residue polypeptide: Maltose/maltodextrin-binding periplasmic protein (396 aa).

Positions 1–26 (MKIKTGARILALSALTTMMFSASALA) are cleaved as a signal peptide.

Belongs to the bacterial solute-binding protein 1 family. As to quaternary structure, the complex is composed of two ATP-binding proteins (MalK), two transmembrane proteins (MalG and MalF) and a solute-binding protein (MalE).

It localises to the periplasm. Its function is as follows. Part of the ABC transporter complex MalEFGK involved in maltose/maltodextrin import. Binds maltose and higher maltodextrins. The chain is Maltose/maltodextrin-binding periplasmic protein (malE) from Klebsiella aerogenes (Enterobacter aerogenes).